The primary structure comprises 474 residues: Phosphomannomutase (474 aa).

Serine 101 (phosphoserine intermediate) is an active-site residue. 4 residues coordinate Mg(2+): serine 101, aspartate 242, aspartate 244, and aspartate 246.

Belongs to the phosphohexose mutase family. Requires Mg(2+) as cofactor.

It catalyses the reaction alpha-D-mannose 1-phosphate = D-mannose 6-phosphate. In Sinorhizobium fredii (strain NBRC 101917 / NGR234), this protein is Phosphomannomutase (noeK).